The chain runs to 515 residues: Bifunctional purine biosynthesis protein PurH (515 aa).

The MGS-like domain maps to Met-1 to Val-145.

Belongs to the PurH family.

It carries out the reaction (6R)-10-formyltetrahydrofolate + 5-amino-1-(5-phospho-beta-D-ribosyl)imidazole-4-carboxamide = 5-formamido-1-(5-phospho-D-ribosyl)imidazole-4-carboxamide + (6S)-5,6,7,8-tetrahydrofolate. The enzyme catalyses IMP + H2O = 5-formamido-1-(5-phospho-D-ribosyl)imidazole-4-carboxamide. It participates in purine metabolism; IMP biosynthesis via de novo pathway; 5-formamido-1-(5-phospho-D-ribosyl)imidazole-4-carboxamide from 5-amino-1-(5-phospho-D-ribosyl)imidazole-4-carboxamide (10-formyl THF route): step 1/1. It functions in the pathway purine metabolism; IMP biosynthesis via de novo pathway; IMP from 5-formamido-1-(5-phospho-D-ribosyl)imidazole-4-carboxamide: step 1/1. This chain is Bifunctional purine biosynthesis protein PurH, found in Streptococcus pneumoniae serotype 2 (strain D39 / NCTC 7466).